The primary structure comprises 376 residues: N-acetyldiaminopimelate deacetylase (376 aa).

Aspartate 69 is an active-site residue. Glutamate 128 serves as the catalytic Proton acceptor.

The protein belongs to the peptidase M20A family. N-acetyldiaminopimelate deacetylase subfamily.

The catalysed reaction is N-acetyl-(2S,6S)-2,6-diaminopimelate + H2O = (2S,6S)-2,6-diaminopimelate + acetate. Its pathway is amino-acid biosynthesis; L-lysine biosynthesis via DAP pathway; LL-2,6-diaminopimelate from (S)-tetrahydrodipicolinate (acetylase route): step 3/3. In terms of biological role, catalyzes the conversion of N-acetyl-diaminopimelate to diaminopimelate and acetate. This is N-acetyldiaminopimelate deacetylase from Bacillus thuringiensis subsp. konkukian (strain 97-27).